We begin with the raw amino-acid sequence, 475 residues long: Ribulose bisphosphate carboxylase large chain (475 aa).

The propeptide occupies 1–2; it reads MS. P3 carries the post-translational modification N-acetylproline. Position 14 is an N6,N6,N6-trimethyllysine (K14). Residues N123 and T173 each contribute to the substrate site. The active-site Proton acceptor is the K175. K177 lines the substrate pocket. K201, D203, and E204 together coordinate Mg(2+). K201 is modified (N6-carboxylysine). Residue H294 is the Proton acceptor of the active site. Residues R295, H327, and S379 each contribute to the substrate site.

It belongs to the RuBisCO large chain family. Type I subfamily. In terms of assembly, heterohexadecamer of 8 large chains and 8 small chains; disulfide-linked. The disulfide link is formed within the large subunit homodimers. It depends on Mg(2+) as a cofactor. The disulfide bond which can form in the large chain dimeric partners within the hexadecamer appears to be associated with oxidative stress and protein turnover.

It localises to the plastid. The protein resides in the chloroplast. It catalyses the reaction 2 (2R)-3-phosphoglycerate + 2 H(+) = D-ribulose 1,5-bisphosphate + CO2 + H2O. It carries out the reaction D-ribulose 1,5-bisphosphate + O2 = 2-phosphoglycolate + (2R)-3-phosphoglycerate + 2 H(+). Its function is as follows. RuBisCO catalyzes two reactions: the carboxylation of D-ribulose 1,5-bisphosphate, the primary event in carbon dioxide fixation, as well as the oxidative fragmentation of the pentose substrate in the photorespiration process. Both reactions occur simultaneously and in competition at the same active site. This Chlorokybus atmophyticus (Soil alga) protein is Ribulose bisphosphate carboxylase large chain.